The chain runs to 572 residues: mRNA cap guanine-N(7) methyltransferase (572 aa).

Disordered stretches follow at residues Met-1–Val-75 and Glu-110–Ser-140. 2 stretches are compositionally biased toward basic and acidic residues: residues Ala-24 to Asp-39 and Ser-59 to Asp-69. Residues Thr-123–Ser-140 show a composition bias toward low complexity. One can recognise an mRNA cap 0 methyltransferase domain in the interval Ser-262–Val-571. MRNA is bound at residue Asn-271–Asn-272. Lys-275, Cys-302, Asp-324, Asp-366, Gln-396, and Tyr-401 together coordinate S-adenosyl-L-methionine.

It belongs to the class I-like SAM-binding methyltransferase superfamily. mRNA cap 0 methyltransferase family.

It localises to the nucleus. The catalysed reaction is a 5'-end (5'-triphosphoguanosine)-ribonucleoside in mRNA + S-adenosyl-L-methionine = a 5'-end (N(7)-methyl 5'-triphosphoguanosine)-ribonucleoside in mRNA + S-adenosyl-L-homocysteine. Functionally, responsible for methylating the 5'-cap structure of mRNAs. The chain is mRNA cap guanine-N(7) methyltransferase (ABD1) from Lodderomyces elongisporus (strain ATCC 11503 / CBS 2605 / JCM 1781 / NBRC 1676 / NRRL YB-4239) (Yeast).